We begin with the raw amino-acid sequence, 257 residues long: uncharacterized protein (257 aa).

2 disordered regions span residues 1 to 164 and 225 to 257; these read MERS…AGAC and TAWSGACGAGPTAATAAQPGKPRSAAAPGRARA. Over residues 10–28 the composition is skewed to basic and acidic residues; the sequence is CGEEPRSGSRRLPKAEGDK. Residues 54-65 show a composition bias toward basic residues; it reads RPNRASGRRRRS. Over residues 125–139 the composition is skewed to pro residues; that stretch reads RPTPRPCAGPAPPPA. Residues 144-162 are compositionally biased toward basic residues; sequence RCRRPRRWPRAGRRGRRAG.

This is an uncharacterized protein from Homo sapiens (Human).